A 292-amino-acid polypeptide reads, in one-letter code: Fat storage-inducing transmembrane protein 1 (292 aa).

Topologically, residues 1-18 (MERGPVVGAGRGAGARIR) are lumenal. Residues 19–39 (ALLGGLVRVLLWVASALLYFG) form a helical membrane-spanning segment. Residues 40-54 (SEQAARLLGSPCLRR) are Cytoplasmic-facing. A helical membrane pass occupies residues 55-75 (LYHAWLAAVVIFGPLLQFHVN). Residues 76–94 (PRTIFASHGNFFNIKFVNS) lie on the Lumenal side of the membrane. A helical membrane pass occupies residues 95–115 (AWGWTCTFLGGFVLLVVFLAT). The Cytoplasmic segment spans residues 116–141 (RRVAVTARHLSRLVVGAAVWRGAGRA). The helical transmembrane segment at 142 to 162 (FLLIEDLTGSCFEPLPQGLLL) threads the bilayer. Topologically, residues 163 to 187 (HELPDRRSCLAAGHQWRGYTVSSHT) are lumenal. Residue His186 is part of the active site. A helical membrane pass occupies residues 188-208 (FLLTFCCLLMAEEAAVFAKYL). At 209 to 220 (AHGLPAGAPLRL) the chain is on the cytoplasmic side. A helical membrane pass occupies residues 221-241 (VFLLNVLLLGLWNFLLLCTVI). The Lumenal portion of the chain corresponds to 242-249 (YFHQYTHK). The active site involves His244. The helical transmembrane segment at 250–270 (VVGAAVGTFAWYLTYGSWYHQ) threads the bilayer. The Cytoplasmic segment spans residues 271–292 (PWSPGSPGHGLFPRPHSIHKHN).

The protein belongs to the FIT family. FIT1 subfamily.

Its subcellular location is the endoplasmic reticulum membrane. In terms of biological role, plays an important role in the formation of lipid droplets (LDs) which are storage organelles at the center of lipid and energy homeostasis. Directly binds to diacylglycerol (DAGs) and triacylglycerol. The sequence is that of Fat storage-inducing transmembrane protein 1 from Bos taurus (Bovine).